Here is a 227-residue protein sequence, read N- to C-terminus: MTAIAPVITIDGPSGAGKGTLCKAMAEALQWHLLDSGAIYRVLALAALHHHVDLASEDALVPLASHLDVRFVSTDGNLEVILEGEDVSGEIRTQEVANAASQVAAFPRVREALLRRQRAFREAPGLIADGRDMGTVVFPDAPVKIFLDASSEERAHRRMLQLQENGFSVNFEHLLAEIKERDDRDRNRAVAPLVPAADALVLDSTRLSIEQVIEKALQYARQKLALA.

12 to 20 (GPSGAGKGT) is an ATP binding site.

This sequence belongs to the cytidylate kinase family. Type 1 subfamily.

It localises to the cytoplasm. The catalysed reaction is CMP + ATP = CDP + ADP. It catalyses the reaction dCMP + ATP = dCDP + ADP. In Salmonella paratyphi A (strain ATCC 9150 / SARB42), this protein is Cytidylate kinase.